Consider the following 397-residue polypeptide: LIM/homeobox protein Lhx9 (397 aa).

2 LIM zinc-binding domains span residues 69 to 130 (ALCA…RFSV) and 131 to 193 (QRCA…LLQG). Disordered regions lie at residues 248–272 (ENEA…RMRT) and 330–364 (ENGG…TLTD). The segment at residues 267 to 326 (TKRMRTSFKHHQLRTMKSYFAINHNPDAKDLKQLAQKTGLTKRVLQVWFQNARAKFRRNL) is a DNA-binding region (homeobox).

In terms of assembly, interacts with LDB1 and LDB2.

It localises to the nucleus. Its function is as follows. Involved in gonadal development. This Bos taurus (Bovine) protein is LIM/homeobox protein Lhx9 (LHX9).